The sequence spans 231 residues: UPF0758 protein aq_1610 (231 aa).

The 122-residue stretch at 110–231 (SIRNPQEAFE…YFSFREEGVL (122 aa)) folds into the MPN domain. Residues His180, His182, and Asp193 each coordinate Zn(2+). Positions 180-193 (HNHPQGEPSPSNED) match the JAMM motif motif.

The protein belongs to the UPF0758 family.

The polypeptide is UPF0758 protein aq_1610 (Aquifex aeolicus (strain VF5)).